The primary structure comprises 218 residues: Ras-related protein RABE1e (218 aa).

22–29 (GDSGVGKS) is a GTP binding site. An Effector region motif is present at residues 44-52 (FITTIGIDF). GTP-binding positions include 70 to 74 (DTAGQ), 128 to 131 (NKAD), and 159 to 160 (SA). Residues 182-218 (TESDTKAEPQGIKITKQDANKASSSSTNEKSACCSYV) form a disordered region. Residues 201–211 (NKASSSSTNEK) are compositionally biased toward polar residues. 2 S-geranylgeranyl cysteine lipidation sites follow: Cys-214 and Cys-215.

The protein belongs to the small GTPase superfamily. Rab family. As to quaternary structure, interacts with PI5K2.

The protein resides in the golgi apparatus membrane. Its subcellular location is the cell membrane. Its function is as follows. Involved in membrane trafficking from the Golgi to the plasma membrane. This is Ras-related protein RABE1e (RABE1E) from Arabidopsis thaliana (Mouse-ear cress).